A 476-amino-acid chain; its full sequence is Cytochrome c oxidase subunit 1 (476 aa).

A helical transmembrane segment spans residues 19–39 (LYYLWFSFLFGSYGFLLSVIL). Position 42 (glutamate 42) interacts with Ca(2+). A run of 8 helical transmembrane segments spans residues 61–81 (MIFT…GLFG), 105–125 (ISLL…AAEF), 151–171 (VIIF…LNFI), 194–214 (LIIT…GVLM), 240–260 (LFWF…FGVI), 278–298 (MILA…HHMY), 310–330 (FTST…NWIC), and 345–365 (LLSL…VILG). A Fe(II)-heme a-binding site is contributed by histidine 66. Histidine 246 contributes to the Cu cation binding site. A cross-link (1'-histidyl-3'-tyrosine (His-Tyr)) is located at residues 246-250 (HPEVY). Tyrosine 250 lines the O2 pocket. Positions 295 and 296 each coordinate Cu cation. Residues histidine 374 and aspartate 375 each coordinate Mg(2+). Helical transmembrane passes span 379–399 (VIAH…FTTV) and 415–435 (SIVI…FLPM). Heme a3 is bound at residue histidine 382. Histidine 384 contacts Fe(II)-heme a. Ca(2+) is bound at residue proline 448. A helical membrane pass occupies residues 455-475 (NGWNMICSIGSTMTLFGLLIF).

Belongs to the heme-copper respiratory oxidase family. In terms of assembly, component of the cytochrome c oxidase (complex IV, CIV), a multisubunit enzyme composed of a catalytic core of 3 subunits and several supernumerary subunits. The complex exists as a monomer or a dimer and forms supercomplexes (SCs) in the inner mitochondrial membrane with ubiquinol-cytochrome c oxidoreductase (cytochrome b-c1 complex, complex III, CIII). Heme serves as cofactor. It depends on Cu cation as a cofactor.

The protein resides in the mitochondrion inner membrane. It catalyses the reaction 4 Fe(II)-[cytochrome c] + O2 + 8 H(+)(in) = 4 Fe(III)-[cytochrome c] + 2 H2O + 4 H(+)(out). It participates in energy metabolism; oxidative phosphorylation. In terms of biological role, component of the cytochrome c oxidase, the last enzyme in the mitochondrial electron transport chain which drives oxidative phosphorylation. The respiratory chain contains 3 multisubunit complexes succinate dehydrogenase (complex II, CII), ubiquinol-cytochrome c oxidoreductase (cytochrome b-c1 complex, complex III, CIII) and cytochrome c oxidase (complex IV, CIV), that cooperate to transfer electrons derived from NADH and succinate to molecular oxygen, creating an electrochemical gradient over the inner membrane that drives transmembrane transport and the ATP synthase. Cytochrome c oxidase is the component of the respiratory chain that catalyzes the reduction of oxygen to water. Electrons originating from reduced cytochrome c in the intermembrane space (IMS) are transferred via the dinuclear copper A center (CU(A)) of subunit 2 and heme A of subunit 1 to the active site in subunit 1, a binuclear center (BNC) formed by heme A3 and copper B (CU(B)). The BNC reduces molecular oxygen to 2 water molecules using 4 electrons from cytochrome c in the IMS and 4 protons from the mitochondrial matrix. This is Cytochrome c oxidase subunit 1 (MT-CO1) from Plasmodium falciparum.